Consider the following 193-residue polypeptide: Inner membrane-spanning protein YciB (193 aa).

6 consecutive transmembrane segments (helical) span residues 5-25, 36-56, 67-87, 93-113, 138-158, and 164-184; these read TLDA…FYIY, IIAA…LMFV, WLVV…QDDF, APII…FLGG, VWVG…FVWV, and FTAF…FWFL.

The protein belongs to the YciB family.

The protein resides in the cell inner membrane. In terms of biological role, plays a role in cell envelope biogenesis, maintenance of cell envelope integrity and membrane homeostasis. In Vitreoscilla sp. (strain C1), this protein is Inner membrane-spanning protein YciB.